The sequence spans 268 residues: Proteasome subunit beta type-4 (268 aa).

Belongs to the peptidase T1B family. In terms of assembly, the 26S proteasome consists of a 20S proteasome core and two 19S regulatory subunits. The 20S proteasome core is composed of 28 subunits that are arranged in four stacked rings, resulting in a barrel-shaped structure. The two end rings are each formed by seven alpha subunits, and the two central rings are each formed by seven beta subunits. The catalytic chamber with the active sites is on the inside of the barrel.

It localises to the cytoplasm. Its subcellular location is the nucleus. Its function is as follows. Non-catalytic component of the proteasome, a multicatalytic proteinase complex which is characterized by its ability to cleave peptides with Arg, Phe, Tyr, Leu, and Glu adjacent to the leaving group at neutral or slightly basic pH. The proteasome has an ATP-dependent proteolytic activity. This is Proteasome subunit beta type-4 (Prosbeta7) from Drosophila melanogaster (Fruit fly).